The chain runs to 534 residues: NEDD8-activating enzyme E1 regulatory subunit (534 aa).

At Ala-2 the chain carries N-acetylalanine. N6-acetyllysine occurs at positions 6 and 341. The segment at 331 to 344 is interaction with UBA3; sequence DMIADSGKYIKLQN.

The protein belongs to the ubiquitin-activating E1 family. ULA1 subfamily. As to quaternary structure, heterodimer of UBA3 and NAE1. The complex binds NEDD8 and UBE2M. Binds APP and TP53BP2. Post-translationally, ubiquitinated by TRIP12, leading to its degradation by the proteasome. As to expression, ubiquitous in fetal tissues. Expressed throughout the adult brain.

It localises to the cell membrane. It functions in the pathway protein modification; protein neddylation. Binding of TP53BP2 to the regulatory subunit NAE1 decreases neddylation activity. In terms of biological role, regulatory subunit of the dimeric UBA3-NAE1 E1 enzyme. E1 activates NEDD8 by first adenylating its C-terminal glycine residue with ATP, thereafter linking this residue to the side chain of the catalytic cysteine, yielding a NEDD8-UBA3 thioester and free AMP. E1 finally transfers NEDD8 to the catalytic cysteine of UBE2M. Necessary for cell cycle progression through the S-M checkpoint. Overexpression of NAE1 causes apoptosis through deregulation of NEDD8 conjugation. The covalent attachment of NEDD8 to target proteins is known as 'neddylation' and the process is involved in the regulation of cell growth, viability and development. The chain is NEDD8-activating enzyme E1 regulatory subunit (NAE1) from Homo sapiens (Human).